The following is a 177-amino-acid chain: Protein GrpE (177 aa).

2 stretches are compositionally biased toward basic and acidic residues: residues 1–19 and 29–41; these read MAKHKHEEHPEDVEVKETV and SPEKSELELANER. The disordered stretch occupies residues 1–41; that stretch reads MAKHKHEEHPEDVEVKETVETAEQAESASPEKSELELANER.

The protein belongs to the GrpE family. In terms of assembly, homodimer.

The protein resides in the cytoplasm. In terms of biological role, participates actively in the response to hyperosmotic and heat shock by preventing the aggregation of stress-denatured proteins, in association with DnaK and GrpE. It is the nucleotide exchange factor for DnaK and may function as a thermosensor. Unfolded proteins bind initially to DnaJ; upon interaction with the DnaJ-bound protein, DnaK hydrolyzes its bound ATP, resulting in the formation of a stable complex. GrpE releases ADP from DnaK; ATP binding to DnaK triggers the release of the substrate protein, thus completing the reaction cycle. Several rounds of ATP-dependent interactions between DnaJ, DnaK and GrpE are required for fully efficient folding. This chain is Protein GrpE, found in Streptococcus gordonii (strain Challis / ATCC 35105 / BCRC 15272 / CH1 / DL1 / V288).